Reading from the N-terminus, the 68-residue chain is Protein SlyX homolog (68 aa).

Belongs to the SlyX family.

This Pseudomonas syringae pv. syringae (strain B728a) protein is Protein SlyX homolog.